A 300-amino-acid polypeptide reads, in one-letter code: Fatty acid elongase 3 (300 aa).

3 consecutive transmembrane segments (helical) span residues 31–51 (VPAVAVVLYLILVLYVPENVM), 61–81 (FLNMLWNLLLTVFSICGAYYC), and 127–147 (IFFDGFVGLWVAAFVLSKIPE). The HxxHH motif signature appears at 165–169 (HWYHH). The active-site Nucleophile is the His168. Transmembrane regions (helical) follow at residues 170-190 (ATVMLFCWHAYAYTISSGLWF), 192-212 (TMNYCVHSIMYFYYFMCACGM), 219-239 (IAPLITMMQILQMVAGTLIVL), and 261-283 (MGLLMYVSYLFLFSQLYYRSYIS).

The protein belongs to the ELO family.

It is found in the endoplasmic reticulum membrane. The enzyme catalyses an acyl-CoA + malonyl-CoA + H(+) = a 3-oxoacyl-CoA + CO2 + CoA. The protein operates within lipid metabolism; fatty acid biosynthesis. Involved in the synthesis of fatty acids. Elongates C14 fatty acids to C18. Required for the maintenance of the global lipidome profile in this parasite. The protein is Fatty acid elongase 3 of Trypanosoma cruzi (strain CL Brener).